The primary structure comprises 231 residues: Large ribosomal subunit protein uL1 (231 aa).

This sequence belongs to the universal ribosomal protein uL1 family. As to quaternary structure, part of the 50S ribosomal subunit.

Functionally, binds directly to 23S rRNA. The L1 stalk is quite mobile in the ribosome, and is involved in E site tRNA release. Its function is as follows. Protein L1 is also a translational repressor protein, it controls the translation of the L11 operon by binding to its mRNA. The chain is Large ribosomal subunit protein uL1 from Mesomycoplasma hyopneumoniae (strain 232) (Mycoplasma hyopneumoniae).